The following is a 508-amino-acid chain: Probable malate:quinone oxidoreductase (508 aa).

This sequence belongs to the MQO family. Requires FAD as cofactor.

It catalyses the reaction (S)-malate + a quinone = a quinol + oxaloacetate. Its pathway is carbohydrate metabolism; tricarboxylic acid cycle; oxaloacetate from (S)-malate (quinone route): step 1/1. This chain is Probable malate:quinone oxidoreductase, found in Chromohalobacter salexigens (strain ATCC BAA-138 / DSM 3043 / CIP 106854 / NCIMB 13768 / 1H11).